Consider the following 407-residue polypeptide: MTQLINVNSRSYRLSSAPTIVICVDGCEQEYINQAIQAGQAPFLAELTDFGTVLTGDCVVPSFTNPNNLSIVTGAPPSVHGICGNFFFDQETQEEVLMNDAKYLRAPTILAEMAKAGQLVAVVTAKDKLRNLLGHQLKGICFSAEKADQVSLEEHGVENILARVGMPVPSVYSADLSEFVFAAGLSLLINERPDFMYLSTTDYVQHKHAPGTPEANAFYAMMDSYFKRYHEQGAIVAITADHGMNAKTDAIGRPNILFLQDLLDAQYGAQRTRVLLPITDPYVVHHGALGSYATVYLRDAVPQRDAIDFLAGIAGVEAVLTRSQACQRFELPEDRIGDLVVLGERLTVLGSAADKHDLSGLTVPLRSHGGVSEQKVPLIFNRKLVGLDSFDRLRNFDIIDLALNHLA.

Asp25, Thr64, Asp202, His206, Asp241, His242, and His368 together coordinate Zn(2+). Residues Thr64 and Asp202 each contribute to the substrate site. Substrate is bound by residues His242 and His368.

Belongs to the alkaline phosphatase family. PhnA subfamily. Homodimer. Zn(2+) serves as cofactor.

It carries out the reaction phosphonoacetate + H2O = acetate + phosphate + H(+). Specifically hydrolyzes phosphonoacetate. Does not have activity on other organophosphonates or acetates. This Pseudomonas putida (Arthrobacter siderocapsulatus) protein is Phosphonoacetate hydrolase.